A 57-amino-acid polypeptide reads, in one-letter code: Large ribosomal subunit protein bL32c (57 aa).

It belongs to the bacterial ribosomal protein bL32 family.

It is found in the plastid. Its subcellular location is the chloroplast. The sequence is that of Large ribosomal subunit protein bL32c from Drimys granadensis.